Here is a 214-residue protein sequence, read N- to C-terminus: ATP synthase subunit 5, mitochondrial (214 aa).

The N-terminal 24 residues, 1 to 24 (MFASRAIRMMSMRPMARTMATKAA), are a transit peptide targeting the mitochondrion.

As to quaternary structure, F-type ATP synthases have 2 components, the catalytic core F(1) and the membrane-embedded component F(0), linked together by a central stalk and a peripheral stalk. The central stalk, also called rotor shaft, is often seen as part of F(1). The peripheral stalk is seen as part of F(0). F(0) contains the membrane channel next to the rotor. F-type ATP synthases form dimers but each monomer functions independently in ATP generation. The dimer consists of 17 different polypeptides: ATP1 (subunit alpha, 3 molecules per monomer, part of F(1)), ATP2 (subunit beta, 3 copies per monomer, part of F(1)), ATP3 (subunit gamma, part of the central stalk), ATP4 (subunit b, part of the peripheral stalk), ATP5/OSCP (subunit 5/OSCP, part of the peripheral stalk), ATP6 (subunit a, part of the peripheral stalk), ATP7 (subunit d, part of the peripheral stalk), ATP8 (subunit 8, part of the peripheral stalk), OLI1 (subunit c, part of the rotor, 10 molecules per monomer), ATP14 (subunit h, part of the peripheral stalk), ATP15 (subunit epsilon, part of the central stalk), ATP16 (subunit delta, part of the central stalk), ATP17 (subunit f, part of the peripheral stalk), ATP18 (subunit i/j, part of the peripheral stalk), ATP19 (subunit k, dimer-specific, at interface between monomers), ATP20 (subunit g, at interface between monomers), TIM11 (subunit e, at interface between monomers).

It is found in the mitochondrion inner membrane. Its function is as follows. Mitochondrial membrane ATP synthase (F(1)F(0) ATP synthase or Complex V) produces ATP from ADP in the presence of a proton gradient across the membrane which is generated by electron transport complexes of the respiratory chain. F-type ATP synthases consist of two structural domains, F(1) - containing the extramembraneous catalytic core, and F(0) - containing the membrane proton channel, linked together by a central stalk and a peripheral stalk. During catalysis, ATP synthesis in the catalytic domain of F(1) is coupled via a rotary mechanism of the central stalk subunits to proton translocation. Part of the complex F(0) domain and the peripheral stalk, which acts as a stator to hold the catalytic alpha/ATP1(3)beta/ATP2(3) subcomplex and subunit a/ATP6 static relative to the rotary elements. The protein is ATP synthase subunit 5, mitochondrial of Yarrowia lipolytica (strain CLIB 122 / E 150) (Yeast).